A 43-amino-acid polypeptide reads, in one-letter code: Protein PsbN (43 aa).

A helical membrane pass occupies residues 7 to 27; sequence IAIFISCLIVSFTGYALYTAF.

The protein belongs to the PsbN family.

The protein resides in the plastid. It localises to the chloroplast thylakoid membrane. Its function is as follows. May play a role in photosystem I and II biogenesis. The protein is Protein PsbN of Psilotum nudum (Whisk fern).